The sequence spans 488 residues: Histone deacetylase 2 (488 aa).

The histone deacetylase stretch occupies residues 9–322 (KKKVCYYYDG…WTYETAVALD (314 aa)). 1D-myo-inositol 1,4,5,6-tetrakisphosphate-binding residues include G28 and K32. Residue H142 is part of the active site. Zn(2+) is bound by residues D177, H179, and D265. Position 271 (R271) interacts with 1D-myo-inositol 1,4,5,6-tetrakisphosphate. A disordered region spans residues 389–488 (AVHEDSGDED…GAKSEQLSNP (100 aa)). A compositionally biased stretch (basic and acidic residues) spans 402-417 (PDKRISIRASDKRIAC). Residues 418-428 (DEEFSDSEDEG) are compositionally biased toward acidic residues. Basic and acidic residues predominate over residues 429 to 481 (EGGRRNVADHKKGAKKARIEEDKKETEDKKADVKEEDKSKDNSGEKTDTKGAK).

Belongs to the histone deacetylase family. HD type 1 subfamily. The cofactor is Zn(2+).

It localises to the nucleus. The protein resides in the cytoplasm. The enzyme catalyses N(6)-acetyl-L-lysyl-[histone] + H2O = L-lysyl-[histone] + acetate. It catalyses the reaction N(6)-acetyl-L-lysyl-[protein] + H2O = L-lysyl-[protein] + acetate. The catalysed reaction is N(6)-(2E)-butenoyl-L-lysyl-[protein] + H2O = (2E)-2-butenoate + L-lysyl-[protein]. It carries out the reaction N(6)-(2-hydroxyisobutanoyl)-L-lysyl-[protein] + H2O = 2-hydroxy-2-methylpropanoate + L-lysyl-[protein]. The enzyme catalyses N(6)-[(S)-lactoyl]-L-lysyl-[protein] + H2O = (S)-lactate + L-lysyl-[protein]. Its activity is regulated as follows. Inositol tetraphosphate (1D-myo-inositol 1,4,5,6-tetrakisphosphate) may act as an intermolecular glue between HDAC2 and N-Cor repressor complex components. Histone deacetylase that catalyzes the deacetylation of lysine residues on the N-terminal part of the core histones (H2A, H2B, H3 and H4). Histone deacetylation gives a tag for epigenetic repression and plays an important role in transcriptional regulation, cell cycle progression and developmental events. Histone deacetylases act via the formation of large multiprotein complexes. Also deacetylates non-histone proteins. In addition to protein deacetylase activity, also acts as a protein-lysine deacylase by recognizing other acyl groups: catalyzes removal of (2E)-butenoyl (crotonyl), lactoyl (lactyl) and 2-hydroxyisobutanoyl (2-hydroxyisobutyryl) acyl groups from lysine residues, leading to protein decrotonylation, delactylation and de-2-hydroxyisobutyrylation, respectively. The protein is Histone deacetylase 2 (HDAC2) of Gallus gallus (Chicken).